A 594-amino-acid polypeptide reads, in one-letter code: Pentatricopeptide repeat-containing protein At1g15480, mitochondrial (594 aa).

Residues 1 to 67 (MFALSKVLRR…WSSSTGRRSL (67 aa)) constitute a mitochondrion transit peptide. Residues 62–75 (TGRRSLSSDAGAKT) are compositionally biased toward low complexity. The interval 62-109 (TGRRSLSSDAGAKTTGDDDDLEDKNVDLATPDETSSDSEDGEEFSGDE) is disordered. Acidic residues predominate over residues 95 to 109 (TSSDSEDGEEFSGDE). PPR repeat units lie at residues 226–260 (GELVYRTLLANHVATSNVRTAEAVFNKMKDLGFPL), 261–294 (STFTCNQMLILYKRVDKKKIADVLLLLEKENLKP), 295–329 (NLNTYKILIDTKGSSNDITGMEQIVETMKSEGVEL), 330–364 (DLRARALIARHYASAGLKEKAEKVLKEMEGESLEE), 432–466 (SSNVYSVLLRVYVDHKMVSEGKDLVKQMSDSGCNI), 467–502 (GALTWDAVIKLYVEAGEVEKAESSLSKAIQSKQIKP), and 503–537 (LMSSFMYLMHEYVRRGDVHNTEKIFQRMKQAGYQS).

The protein belongs to the PPR family. P subfamily.

It localises to the mitochondrion. The chain is Pentatricopeptide repeat-containing protein At1g15480, mitochondrial from Arabidopsis thaliana (Mouse-ear cress).